The following is a 344-amino-acid chain: Anthranilate phosphoribosyltransferase (344 aa).

5-phospho-alpha-D-ribose 1-diphosphate is bound by residues glycine 84, 87–88 (GD), threonine 92, 94–97 (NIST), 112–120 (KHGNRSVSS), and serine 124. Glycine 84 is an anthranilate binding site. Serine 96 is a Mg(2+) binding site. Residue asparagine 115 participates in anthranilate binding. An anthranilate-binding site is contributed by arginine 170. Aspartate 229 and glutamate 230 together coordinate Mg(2+).

Belongs to the anthranilate phosphoribosyltransferase family. In terms of assembly, homodimer. The cofactor is Mg(2+).

It carries out the reaction N-(5-phospho-beta-D-ribosyl)anthranilate + diphosphate = 5-phospho-alpha-D-ribose 1-diphosphate + anthranilate. It functions in the pathway amino-acid biosynthesis; L-tryptophan biosynthesis; L-tryptophan from chorismate: step 2/5. In terms of biological role, catalyzes the transfer of the phosphoribosyl group of 5-phosphorylribose-1-pyrophosphate (PRPP) to anthranilate to yield N-(5'-phosphoribosyl)-anthranilate (PRA). The sequence is that of Anthranilate phosphoribosyltransferase from Xylella fastidiosa (strain 9a5c).